We begin with the raw amino-acid sequence, 125 residues long: Histone H2A (125 aa).

Residues 1-18 (MSGRGKGGKARAKAKSRS) are compositionally biased toward basic residues. The tract at residues 1–21 (MSGRGKGGKARAKAKSRSSRA) is disordered. Ser2 bears the N-acetylserine mark. Residue Ser2 is modified to Phosphoserine. Position 104 is an N5-methylglutamine (Gln104).

Belongs to the histone H2A family. In terms of assembly, the nucleosome is a histone octamer containing two molecules each of H2A, H2B, H3 and H4 assembled in one H3-H4 heterotetramer and two H2A-H2B heterodimers. The octamer wraps approximately 147 bp of DNA.

Its subcellular location is the nucleus. The protein localises to the chromosome. Functionally, core component of nucleosome. Nucleosomes wrap and compact DNA into chromatin, limiting DNA accessibility to the cellular machineries which require DNA as a template. Histones thereby play a central role in transcription regulation, DNA repair, DNA replication and chromosomal stability. DNA accessibility is regulated via a complex set of post-translational modifications of histones, also called histone code, and nucleosome remodeling. This chain is Histone H2A, found in Asterias rubens (Common European starfish).